The sequence spans 470 residues: Dihydrolipoyl dehydrogenase (470 aa).

Residues Glu39 to Cys47, Lys56, and Ala119 contribute to the FAD site. Cys47 and Cys52 form a disulfide bridge. Residues Gly183–Ile187, Glu206, and Thr272–Arg275 contribute to the NAD(+) site. FAD is bound by residues Asp315 and Ala323. His447 serves as the catalytic Proton acceptor.

It belongs to the class-I pyridine nucleotide-disulfide oxidoreductase family. Homodimer. Component of two multienzyme complexes: pyruvate dehydrogenase complex and oxoglutarate dehydrogenase complex. The cofactor is FAD.

The protein localises to the cytoplasm. It catalyses the reaction N(6)-[(R)-dihydrolipoyl]-L-lysyl-[protein] + NAD(+) = N(6)-[(R)-lipoyl]-L-lysyl-[protein] + NADH + H(+). In terms of biological role, catalyzes the oxidation of dihydrolipoamide to lipoamide. The chain is Dihydrolipoyl dehydrogenase (pdhD) from Bacillus subtilis (strain 168).